The sequence spans 318 residues: Mitochondrial coenzyme A transporter SLC25A42 (318 aa).

Solcar repeat units follow at residues 31-117 (RQVL…YKRI), 129-214 (LPPW…LKSL), and 224-312 (PYPF…MQIL). A run of 6 helical transmembrane segments spans residues 33 to 53 (VLSS…AVAP), 89 to 109 (LWRG…IQFS), 135 to 155 (LLAG…LDLV), 186 to 206 (LYFG…LSFF), 230 to 250 (MVFG…LDVV), and 293 to 313 (LKGP…QILL).

This sequence belongs to the mitochondrial carrier (TC 2.A.29) family. Widely expressed. Highly expressed in adipose, followed by hypothalamus and brain coronal sections containing corpus callosum, fornix, thalamus, hypothalamus, optic chiasm, pons, midbrain, and cerebellum.

Its subcellular location is the mitochondrion inner membrane. The enzyme catalyses ADP(out) + CoA(in) = ADP(in) + CoA(out). It catalyses the reaction 3'-dephospho-CoA(in) + ADP(out) = 3'-dephospho-CoA(out) + ADP(in). The catalysed reaction is adenosine 3',5'-bisphosphate(in) + ADP(out) = adenosine 3',5'-bisphosphate(out) + ADP(in). It carries out the reaction AMP(in) + ADP(out) = AMP(out) + ADP(in). The enzyme catalyses dADP(in) + ADP(out) = dADP(out) + ADP(in). It catalyses the reaction ADP(in) + ATP(out) = ADP(out) + ATP(in). Mitochondrial carrier mediating the transport of coenzyme A (CoA) in mitochondria in exchange for intramitochondrial (deoxy)adenine nucleotides and adenosine 3',5'-diphosphate. The polypeptide is Mitochondrial coenzyme A transporter SLC25A42 (Slc25a42) (Rattus norvegicus (Rat)).